Reading from the N-terminus, the 611-residue chain is Phosphoenolpyruvate carboxykinase [GTP] (611 aa).

Substrate-binding positions include arginine 82 and 222–224 (YGG). Residues lysine 231 and histidine 251 each coordinate Mn(2+). Position 273 (serine 273) interacts with substrate. GTP is bound at residue 274–279 (ACGKTN). Cysteine 275 is an active-site residue. A Mn(2+)-binding site is contributed by aspartate 298. 389–391 (NSR) is a substrate binding site. GTP-binding positions include arginine 391, arginine 422, and 517–520 (FGDN).

Belongs to the phosphoenolpyruvate carboxykinase [GTP] family. As to quaternary structure, monomer. The cofactor is Mn(2+).

The protein resides in the cytoplasm. The catalysed reaction is oxaloacetate + GTP = phosphoenolpyruvate + GDP + CO2. The protein operates within carbohydrate biosynthesis; gluconeogenesis. Its function is as follows. Catalyzes the conversion of oxaloacetate (OAA) to phosphoenolpyruvate (PEP), the rate-limiting step in the metabolic pathway that produces glucose from lactate and other precursors derived from the citric acid cycle. This chain is Phosphoenolpyruvate carboxykinase [GTP], found in Arthrobacter sp. (strain FB24).